A 940-amino-acid chain; its full sequence is Protein translocase subunit SecA (940 aa).

ATP-binding positions include Gln87, 105–109 (GEGKT), and Asp494. The segment at 879–940 (AQQQKKAVEG…KCHGASEASV (62 aa)) is disordered. Over residues 884–898 (KAVEGRATADGKLDE) the composition is skewed to basic and acidic residues. Positions 900 to 915 (SVAAAARPAAASRPAV) are enriched in low complexity. Zn(2+) is bound by residues Cys921, Cys923, Cys932, and His933.

Belongs to the SecA family. Monomer and homodimer. Part of the essential Sec protein translocation apparatus which comprises SecA, SecYEG and auxiliary proteins SecDF-YajC and YidC. The cofactor is Zn(2+).

The protein localises to the cell inner membrane. It is found in the cytoplasm. It carries out the reaction ATP + H2O + cellular proteinSide 1 = ADP + phosphate + cellular proteinSide 2.. Part of the Sec protein translocase complex. Interacts with the SecYEG preprotein conducting channel. Has a central role in coupling the hydrolysis of ATP to the transfer of proteins into and across the cell membrane, serving as an ATP-driven molecular motor driving the stepwise translocation of polypeptide chains across the membrane. This chain is Protein translocase subunit SecA, found in Myxococcus xanthus (strain DK1622).